Reading from the N-terminus, the 108-residue chain is UPF0060 membrane protein DSY4629 (108 aa).

A run of 4 helical transmembrane segments spans residues 5-25 (IILF…VWLW), 31-51 (PFWY…IPTL), 60-80 (VYAA…WGID), and 86-106 (NYDW…LWAP).

Belongs to the UPF0060 family.

The protein localises to the cell membrane. The chain is UPF0060 membrane protein DSY4629 from Desulfitobacterium hafniense (strain Y51).